The chain runs to 99 residues: uncharacterized protein (99 aa).

Helical transmembrane passes span 7 to 29 (FFISYFLPLISFLGLLNLLYTLY), 39 to 61 (FISSSVVSIFTILFGTMPYARYN), and 68 to 90 (FCNLMVFVLPVSFFLVSLLLWLL).

The protein resides in the cell membrane. This is an uncharacterized protein from Archaeoglobus fulgidus (strain ATCC 49558 / DSM 4304 / JCM 9628 / NBRC 100126 / VC-16).